Consider the following 262-residue polypeptide: Putative hydro-lyase Cbei_2760 (262 aa).

Belongs to the D-glutamate cyclase family.

This is Putative hydro-lyase Cbei_2760 from Clostridium beijerinckii (strain ATCC 51743 / NCIMB 8052) (Clostridium acetobutylicum).